Consider the following 200-residue polypeptide: GTP cyclohydrolase-2 (200 aa).

52–56 is a binding site for GTP; it reads RIHSE. Residues Cys-57, Cys-68, and Cys-70 each coordinate Zn(2+). Residues Gln-73, 94–96, and Thr-116 contribute to the GTP site; that span reads EGR. Asp-128 (proton acceptor) is an active-site residue. The Nucleophile role is filled by Arg-130. Residues Thr-151 and Lys-156 each coordinate GTP.

The protein belongs to the GTP cyclohydrolase II family. It depends on Zn(2+) as a cofactor.

It carries out the reaction GTP + 4 H2O = 2,5-diamino-6-hydroxy-4-(5-phosphoribosylamino)-pyrimidine + formate + 2 phosphate + 3 H(+). It participates in cofactor biosynthesis; riboflavin biosynthesis; 5-amino-6-(D-ribitylamino)uracil from GTP: step 1/4. Catalyzes the conversion of GTP to 2,5-diamino-6-ribosylamino-4(3H)-pyrimidinone 5'-phosphate (DARP), formate and pyrophosphate. The sequence is that of GTP cyclohydrolase-2 from Psychromonas ingrahamii (strain DSM 17664 / CCUG 51855 / 37).